Consider the following 193-residue polypeptide: uncharacterized protein (193 aa).

The next 4 helical transmembrane spans lie at 8–28, 46–66, 82–102, and 141–161; these read GVLVGGLWAWIAPPIHAVVAI, FFIAPFMLLGLLSVLAVVASA, GLSIGLTTAAAIAAGVGALVV, and IALTLMWPAGIASLVYALLAA.

This sequence to M.leprae ML1222.

The protein localises to the cell membrane. This is an uncharacterized protein from Mycobacterium tuberculosis (strain CDC 1551 / Oshkosh).